The primary structure comprises 2352 residues: Cell wall alpha-1,3-glucan synthase mok12 (2352 aa).

The tract at residues 1786–1813 (SNDFGIREVPLSDANQSSQADSTSIDRY) is disordered. Residues 1798–1813 (DANQSSQADSTSIDRY) are compositionally biased toward polar residues.

It belongs to the glycosyltransferase group 1 family.

The enzyme catalyses [(1-&gt;3)-alpha-D-glucosyl](n) + UDP-alpha-D-glucose = [(1-&gt;3)-alpha-D-glucosyl](n+1) + UDP + H(+). In Schizosaccharomyces pombe (strain 972 / ATCC 24843) (Fission yeast), this protein is Cell wall alpha-1,3-glucan synthase mok12 (mok12).